Here is a 512-residue protein sequence, read N- to C-terminus: MENKEAGTPPPIPSREGRLQPTLLLATLSAAFGSAFQYGYNLSVVNTPHKVFKSFYNETYFERHATFMDGKLMLLLWSCTVSMFPLGGLLGSLLVGLLVDSCGRKGTLLINNIFAIIPAILMGVSKVAKAFELIVFSRVVLGVCAGISYSALPMYLGELAPKNLRGMVGTMTEVFVIVGVFLAQIFSLQAILGNPAGWPVLLALTGVPALLQLLTLPFFPESPRYSLIQKGDEATARQALRRLRGHTDMEAELEDMRAEARAERAEGHLSVLHLCALRSLRWQLLSIIVLMAGQQLSGINAINYYADTIYTSAGVEAAHSQYVTVGSGVVNIVMTITSAVLVERLGRRHLLLAGYGICGSACLVLTVVLLFQNRVPELSYLGIICVFAYIAGHSIGPSPVPSVVRTEIFLQSSRRAAFMVDGAVHWLTNFIIGFLFPSIQEAIGAYSFIIFAGICLLTAIYIYVVIPETKGKTFVEINRIFAKRNRVKLPEEKEETIDAGPPTASPAKETSF.

Over 1–21 the chain is Cytoplasmic; sequence MENKEAGTPPPIPSREGRLQP. Residues 22 to 42 form a helical membrane-spanning segment; that stretch reads TLLLATLSAAFGSAFQYGYNL. At 43–78 the chain is on the extracellular side; the sequence is SVVNTPHKVFKSFYNETYFERHATFMDGKLMLLLWS. Residue asparagine 57 is glycosylated (N-linked (GlcNAc...) asparagine). The helical transmembrane segment at 79–99 threads the bilayer; sequence CTVSMFPLGGLLGSLLVGLLV. The Cytoplasmic segment spans residues 100–107; the sequence is DSCGRKGT. The chain crosses the membrane as a helical span at residues 108–128; sequence LLINNIFAIIPAILMGVSKVA. Over 129 to 138 the chain is Extracellular; that stretch reads KAFELIVFSR. The chain crosses the membrane as a helical span at residues 139-159; sequence VVLGVCAGISYSALPMYLGEL. Over 160-172 the chain is Cytoplasmic; sequence APKNLRGMVGTMT. The helical transmembrane segment at 173 to 193 threads the bilayer; sequence EVFVIVGVFLAQIFSLQAILG. Residues 194-198 lie on the Extracellular side of the membrane; sequence NPAGW. Residues 199-219 traverse the membrane as a helical segment; the sequence is PVLLALTGVPALLQLLTLPFF. The Cytoplasmic segment spans residues 220-281; that stretch reads PESPRYSLIQ…LHLCALRSLR (62 aa). Residues 282-302 traverse the membrane as a helical segment; that stretch reads WQLLSIIVLMAGQQLSGINAI. D-glucose is bound by residues 294 to 295 and asparagine 300; that span reads QQ. The Extracellular segment spans residues 303–321; it reads NYYADTIYTSAGVEAAHSQ. A helical membrane pass occupies residues 322–342; the sequence is YVTVGSGVVNIVMTITSAVLV. D-glucose is bound at residue asparagine 331. Over 343 to 350 the chain is Cytoplasmic; sequence ERLGRRHL. Residues 351–371 traverse the membrane as a helical segment; the sequence is LLAGYGICGSACLVLTVVLLF. The Extracellular portion of the chain corresponds to 372–379; sequence QNRVPELS. A helical membrane pass occupies residues 380–400; the sequence is YLGIICVFAYIAGHSIGPSPV. The Cytoplasmic portion of the chain corresponds to 401–415; that stretch reads PSVVRTEIFLQSSRR. The chain crosses the membrane as a helical span at residues 416-436; sequence AAFMVDGAVHWLTNFIIGFLF. The Extracellular segment spans residues 437–445; it reads PSIQEAIGA. A helical membrane pass occupies residues 446–466; sequence YSFIIFAGICLLTAIYIYVVI. At 467-512 the chain is on the cytoplasmic side; it reads PETKGKTFVEINRIFAKRNRVKLPEEKEETIDAGPPTASPAKETSF. The disordered stretch occupies residues 491–512; it reads EEKEETIDAGPPTASPAKETSF.

It belongs to the major facilitator superfamily. Sugar transporter (TC 2.A.1.1) family. Glucose transporter subfamily. As to expression, expressed in small intestine and colon. Weakly expressed in testis and prostate.

It is found in the cell membrane. The protein localises to the apical cell membrane. It carries out the reaction D-glucose(out) = D-glucose(in). It catalyses the reaction D-fructose(out) = D-fructose(in). Its activity is regulated as follows. Glucose and fructose transport are inhibited by the flavonoid apigenin. Probable sugar transporter. Even if its physiological substrate is subject to discussion, it is able to transport glucose and fructose. Does not transport galactose, 2-deoxy-d-glucose and xylose. This is Solute carrier family 2, facilitated glucose transporter member 7 from Homo sapiens (Human).